Here is a 185-residue protein sequence, read N- to C-terminus: Prorelaxin (185 aa).

Positions 1 to 24 (MPRLFLFHLLGVCLLLNQFSRAVA) are cleaved as a signal peptide. 3 cysteine pairs are disulfide-bonded: C35–C172, C47–C185, and C171–C176. Positions 56-157 (SLNQEDAPLK…LRSLGLDTHS (102 aa)) are cleaved as a propeptide — connecting peptide.

The protein belongs to the insulin family. As to quaternary structure, heterodimer of a B chain and an A chain linked by two disulfide bonds.

Its subcellular location is the secreted. Its function is as follows. Relaxin is an ovarian hormone that acts with estrogen to produce dilatation of the birth canal in many mammals. May be involved in remodeling of connective tissues during pregnancy, promoting growth of pubic ligaments and ripening of the cervix. The polypeptide is Prorelaxin (RLN) (Macaca mulatta (Rhesus macaque)).